A 190-amino-acid chain; its full sequence is Isopentenyl-diphosphate Delta-isomerase (190 aa).

Histidine 27 and histidine 34 together coordinate Mn(2+). The Nudix hydrolase domain maps to 32–171 (PLHFAFSSYI…PFVFSPWMVD (140 aa)). Residue cysteine 69 is part of the active site. Position 69 (cysteine 69) interacts with Mg(2+). Position 71 (histidine 71) interacts with Mn(2+). Glutamate 89 contributes to the Mg(2+) binding site. Glutamate 119 and glutamate 121 together coordinate Mn(2+). Residue glutamate 121 is part of the active site.

This sequence belongs to the IPP isomerase type 1 family. Mg(2+) is required as a cofactor. Requires Mn(2+) as cofactor.

It is found in the cytoplasm. It catalyses the reaction isopentenyl diphosphate = dimethylallyl diphosphate. The protein operates within isoprenoid biosynthesis; dimethylallyl diphosphate biosynthesis; dimethylallyl diphosphate from isopentenyl diphosphate: step 1/1. Functionally, catalyzes the 1,3-allylic rearrangement of the homoallylic substrate isopentenyl (IPP) to its highly electrophilic allylic isomer, dimethylallyl diphosphate (DMAPP). This Corynebacterium efficiens (strain DSM 44549 / YS-314 / AJ 12310 / JCM 11189 / NBRC 100395) protein is Isopentenyl-diphosphate Delta-isomerase.